A 495-amino-acid polypeptide reads, in one-letter code: Glycerol kinase (495 aa).

T11 serves as a coordination point for ADP. T11, T12, and S13 together coordinate ATP. T11 serves as a coordination point for sn-glycerol 3-phosphate. R15 is an ADP binding site. Residues R81, E82, Y133, and D242 each contribute to the sn-glycerol 3-phosphate site. 5 residues coordinate glycerol: R81, E82, Y133, D242, and Q243. ADP is bound by residues T264 and G307. ATP contacts are provided by T264, G307, Q311, and G408. Residues G408 and N412 each coordinate ADP.

Belongs to the FGGY kinase family.

It catalyses the reaction glycerol + ATP = sn-glycerol 3-phosphate + ADP + H(+). Its pathway is polyol metabolism; glycerol degradation via glycerol kinase pathway; sn-glycerol 3-phosphate from glycerol: step 1/1. Inhibited by fructose 1,6-bisphosphate (FBP). Its function is as follows. Key enzyme in the regulation of glycerol uptake and metabolism. Catalyzes the phosphorylation of glycerol to yield sn-glycerol 3-phosphate. The chain is Glycerol kinase from Citrifermentans bemidjiense (strain ATCC BAA-1014 / DSM 16622 / JCM 12645 / Bem) (Geobacter bemidjiensis).